A 463-amino-acid chain; its full sequence is UDP-N-acetylmuramoylalanine--D-glutamate ligase (463 aa).

Residue 109–115 coordinates ATP; sequence GTDGKST.

It belongs to the MurCDEF family.

It is found in the cytoplasm. It catalyses the reaction UDP-N-acetyl-alpha-D-muramoyl-L-alanine + D-glutamate + ATP = UDP-N-acetyl-alpha-D-muramoyl-L-alanyl-D-glutamate + ADP + phosphate + H(+). It functions in the pathway cell wall biogenesis; peptidoglycan biosynthesis. Cell wall formation. Catalyzes the addition of glutamate to the nucleotide precursor UDP-N-acetylmuramoyl-L-alanine (UMA). This is UDP-N-acetylmuramoylalanine--D-glutamate ligase from Leptospira interrogans serogroup Icterohaemorrhagiae serovar Lai (strain 56601).